We begin with the raw amino-acid sequence, 629 residues long: Translation initiation factor IF-2 (629 aa).

Positions 1–20 (MAKNIKTNKKPQQVNKKEMS) are disordered. The tr-type G domain maps to 127-297 (HRAPIVTIMG…LLIAEMQDYK (171 aa)). The tract at residues 136–143 (GHVDHGKT) is G1. 136 to 143 (GHVDHGKT) is a binding site for GTP. The interval 161–165 (GITQA) is G2. Positions 183–186 (DTPG) are G3. Residues 183–187 (DTPGH) and 237–240 (NKCD) contribute to the GTP site. Positions 237–240 (NKCD) are G4. A G5 region spans residues 273-275 (SAK).

The protein belongs to the TRAFAC class translation factor GTPase superfamily. Classic translation factor GTPase family. IF-2 subfamily.

The protein localises to the cytoplasm. In terms of biological role, one of the essential components for the initiation of protein synthesis. Protects formylmethionyl-tRNA from spontaneous hydrolysis and promotes its binding to the 30S ribosomal subunits. Also involved in the hydrolysis of GTP during the formation of the 70S ribosomal complex. This Mesoplasma florum (strain ATCC 33453 / NBRC 100688 / NCTC 11704 / L1) (Acholeplasma florum) protein is Translation initiation factor IF-2.